Reading from the N-terminus, the 115-residue chain is NADH-ubiquinone oxidoreductase chain 3 (115 aa).

3 helical membrane passes run 5 to 25 (LTLMTDVALALLLVMIAFWLP), 55 to 75 (FFLVAITFLLFDLEIALLLPL), and 86 to 106 (LMLTMALLLISILAAGLAYEW).

This sequence belongs to the complex I subunit 3 family. In terms of assembly, core subunit of respiratory chain NADH dehydrogenase (Complex I) which is composed of 45 different subunits. Interacts with TMEM186. Interacts with TMEM242.

Its subcellular location is the mitochondrion inner membrane. The catalysed reaction is a ubiquinone + NADH + 5 H(+)(in) = a ubiquinol + NAD(+) + 4 H(+)(out). Core subunit of the mitochondrial membrane respiratory chain NADH dehydrogenase (Complex I) which catalyzes electron transfer from NADH through the respiratory chain, using ubiquinone as an electron acceptor. Essential for the catalytic activity of complex I. The polypeptide is NADH-ubiquinone oxidoreductase chain 3 (Avahi cleesei (Cleese's woolly lemur)).